Consider the following 93-residue polypeptide: Large ribosomal subunit protein bL27 (93 aa).

The propeptide occupies 1 to 8; the sequence is MIMDLQFF. The disordered stretch occupies residues 8–29; it reads FSHHKGGGSTANGRNSAGRRLG.

The protein belongs to the bacterial ribosomal protein bL27 family. The N-terminus is cleaved by ribosomal processing cysteine protease Prp.

This Limosilactobacillus fermentum (strain NBRC 3956 / LMG 18251) (Lactobacillus fermentum) protein is Large ribosomal subunit protein bL27.